We begin with the raw amino-acid sequence, 102 residues long: Small ribosomal subunit protein uS10 (102 aa).

Belongs to the universal ribosomal protein uS10 family. Part of the 30S ribosomal subunit.

Its function is as follows. Involved in the binding of tRNA to the ribosomes. This is Small ribosomal subunit protein uS10 from Clostridium beijerinckii (strain ATCC 51743 / NCIMB 8052) (Clostridium acetobutylicum).